We begin with the raw amino-acid sequence, 276 residues long: Octanoyltransferase LipM (276 aa).

The BPL/LPL catalytic domain maps to 31 to 246; sequence GKVPPTVRFY…GFASGLEVEL (216 aa). Catalysis depends on Cys-148, which acts as the Acyl-thioester intermediate.

This sequence belongs to the octanoyltransferase LipM family. In terms of assembly, monomer.

It catalyses the reaction octanoyl-[ACP] + L-lysyl-[protein] = N(6)-octanoyl-L-lysyl-[protein] + holo-[ACP] + H(+). Its pathway is protein modification; protein lipoylation via endogenous pathway; protein N(6)-(lipoyl)lysine from octanoyl-[acyl-carrier-protein]. In terms of biological role, catalyzes the transfer of endogenously produced octanoic acid from octanoyl-acyl-carrier-protein onto the lipoyl domain of GcvH, an intermediate carrier during protein lipoylation. The sequence is that of Octanoyltransferase LipM from Brevibacillus brevis (strain 47 / JCM 6285 / NBRC 100599).